A 138-amino-acid polypeptide reads, in one-letter code: Large ribosomal subunit protein uL16 (138 aa).

A compositionally biased stretch (basic residues) spans 1-17 (MLIPRRVKHRKQHHPTR). The tract at residues 1–24 (MLIPRRVKHRKQHHPTRRGAASGG) is disordered.

The protein belongs to the universal ribosomal protein uL16 family. In terms of assembly, part of the 50S ribosomal subunit.

Binds 23S rRNA and is also seen to make contacts with the A and possibly P site tRNAs. This Kineococcus radiotolerans (strain ATCC BAA-149 / DSM 14245 / SRS30216) protein is Large ribosomal subunit protein uL16.